The chain runs to 207 residues: Large ribosomal subunit protein uL4 (207 aa).

The interval 44–76 (RRQGTQSTKTKSEVRGGGKKPWRQKGTGRARQG) is disordered. The segment covering 60 to 71 (GGKKPWRQKGTG) has biased composition (basic residues).

This sequence belongs to the universal ribosomal protein uL4 family. In terms of assembly, part of the 50S ribosomal subunit.

One of the primary rRNA binding proteins, this protein initially binds near the 5'-end of the 23S rRNA. It is important during the early stages of 50S assembly. It makes multiple contacts with different domains of the 23S rRNA in the assembled 50S subunit and ribosome. Functionally, forms part of the polypeptide exit tunnel. In Ruminiclostridium cellulolyticum (strain ATCC 35319 / DSM 5812 / JCM 6584 / H10) (Clostridium cellulolyticum), this protein is Large ribosomal subunit protein uL4.